The following is a 461-amino-acid chain: Alcaligin biosynthesis enzyme (461 aa).

An FAD-binding site is contributed by 9–15 (VAIGIGP).

The protein belongs to the lysine N(6)-hydroxylase/L-ornithine N(5)-oxygenase family. FAD is required as a cofactor.

It participates in siderophore biosynthesis; alcaligin biosynthesis. The protein is Alcaligin biosynthesis enzyme (alcA) of Bordetella parapertussis (strain 12822 / ATCC BAA-587 / NCTC 13253).